Reading from the N-terminus, the 323-residue chain is Formimidoylglutamase (323 aa).

Residues histidine 131, aspartate 157, histidine 159, aspartate 161, cysteine 245, and aspartate 247 each contribute to the Mn(2+) site.

Belongs to the arginase family. It depends on Mn(2+) as a cofactor.

The catalysed reaction is N-formimidoyl-L-glutamate + H2O = formamide + L-glutamate. The protein operates within amino-acid degradation; L-histidine degradation into L-glutamate; L-glutamate from N-formimidoyl-L-glutamate (hydrolase route): step 1/1. Catalyzes the conversion of N-formimidoyl-L-glutamate to L-glutamate and formamide. In Geobacillus kaustophilus (strain HTA426), this protein is Formimidoylglutamase.